Reading from the N-terminus, the 244-residue chain is tRNA (guanine-N(1)-)-methyltransferase (244 aa).

S-adenosyl-L-methionine contacts are provided by residues glycine 110 and 129 to 134 (IGDYIL).

Belongs to the RNA methyltransferase TrmD family. Homodimer.

It is found in the cytoplasm. The enzyme catalyses guanosine(37) in tRNA + S-adenosyl-L-methionine = N(1)-methylguanosine(37) in tRNA + S-adenosyl-L-homocysteine + H(+). Functionally, specifically methylates guanosine-37 in various tRNAs. The sequence is that of tRNA (guanine-N(1)-)-methyltransferase from Syntrophomonas wolfei subsp. wolfei (strain DSM 2245B / Goettingen).